The sequence spans 702 residues: Ribosomal RNA large subunit methyltransferase K/L (702 aa).

The THUMP domain maps to 43 to 154; it reads LVYQSLMWSR…KETASIALDL (112 aa).

Belongs to the methyltransferase superfamily. RlmKL family.

Its subcellular location is the cytoplasm. The catalysed reaction is guanosine(2445) in 23S rRNA + S-adenosyl-L-methionine = N(2)-methylguanosine(2445) in 23S rRNA + S-adenosyl-L-homocysteine + H(+). The enzyme catalyses guanosine(2069) in 23S rRNA + S-adenosyl-L-methionine = N(2)-methylguanosine(2069) in 23S rRNA + S-adenosyl-L-homocysteine + H(+). Specifically methylates the guanine in position 2445 (m2G2445) and the guanine in position 2069 (m7G2069) of 23S rRNA. The chain is Ribosomal RNA large subunit methyltransferase K/L from Escherichia coli (strain SMS-3-5 / SECEC).